The following is a 593-amino-acid chain: Proline dehydrogenase 1, mitochondrial (593 aa).

Positions 24–44 (PAAREQPAAGPGAEPVCGPAE) are disordered. Residues Lys-368 and Lys-479 each carry the N6-acetyllysine modification.

This sequence belongs to the proline oxidase family. FAD is required as a cofactor.

The protein localises to the mitochondrion matrix. The enzyme catalyses L-proline + a quinone = (S)-1-pyrroline-5-carboxylate + a quinol + H(+). The protein operates within amino-acid degradation; L-proline degradation into L-glutamate; L-glutamate from L-proline: step 1/2. In terms of biological role, converts proline to delta-1-pyrroline-5-carboxylate. This chain is Proline dehydrogenase 1, mitochondrial, found in Bos taurus (Bovine).